The sequence spans 192 residues: MAVPASPQHPRGYGILLLTLLMKALAAAAACNHLRPQDATFSRDSLQLLRDMAPSPPQPCPQHNAPCSFNDTVLDTNNTQQADKTTHNILQHLFKILSGPTTPAHWIDSQRQSLLNQIQRYAQHLEQCLADSHTRSRTRWPHNPHLTINKHFSCLHAFLHDNDYSACAWDHVRLRARAWLLHIHDLVRNTRT.

The signal sequence occupies residues 1 to 30 (MAVPASPQHPRGYGILLLTLLMKALAAAAA). Cystine bridges form between Cys-31-Cys-128, Cys-60-Cys-154, and Cys-67-Cys-167. N-linked (GlcNAc...) asparagine glycosylation is found at Asn-70 and Asn-77.

Belongs to the alpha/beta interferon family.

The protein resides in the secreted. In terms of biological role, has antiviral activities. The chain is Interferon from Meleagris gallopavo (Wild turkey).